A 571-amino-acid polypeptide reads, in one-letter code: Proline--tRNA ligase (571 aa).

Belongs to the class-II aminoacyl-tRNA synthetase family. ProS type 1 subfamily. In terms of assembly, homodimer.

It localises to the cytoplasm. The enzyme catalyses tRNA(Pro) + L-proline + ATP = L-prolyl-tRNA(Pro) + AMP + diphosphate. Its function is as follows. Catalyzes the attachment of proline to tRNA(Pro) in a two-step reaction: proline is first activated by ATP to form Pro-AMP and then transferred to the acceptor end of tRNA(Pro). As ProRS can inadvertently accommodate and process non-cognate amino acids such as alanine and cysteine, to avoid such errors it has two additional distinct editing activities against alanine. One activity is designated as 'pretransfer' editing and involves the tRNA(Pro)-independent hydrolysis of activated Ala-AMP. The other activity is designated 'posttransfer' editing and involves deacylation of mischarged Ala-tRNA(Pro). The misacylated Cys-tRNA(Pro) is not edited by ProRS. The polypeptide is Proline--tRNA ligase (Vibrio parahaemolyticus serotype O3:K6 (strain RIMD 2210633)).